The sequence spans 379 residues: Queuine tRNA-ribosyltransferase (379 aa).

D91 serves as the catalytic Proton acceptor. Substrate-binding positions include 91-95 (DSGGF), D145, Q189, and G216. Residues 247 to 253 (GVGKPED) form an RNA binding region. The active-site Nucleophile is the D266. The interval 271 to 275 (TRNAR) is RNA binding; important for wobble base 34 recognition. C304, C306, C309, and H335 together coordinate Zn(2+).

Belongs to the queuine tRNA-ribosyltransferase family. Homodimer. Within each dimer, one monomer is responsible for RNA recognition and catalysis, while the other monomer binds to the replacement base PreQ1. It depends on Zn(2+) as a cofactor.

It carries out the reaction 7-aminomethyl-7-carbaguanine + guanosine(34) in tRNA = 7-aminomethyl-7-carbaguanosine(34) in tRNA + guanine. It functions in the pathway tRNA modification; tRNA-queuosine biosynthesis. Its function is as follows. Catalyzes the base-exchange of a guanine (G) residue with the queuine precursor 7-aminomethyl-7-deazaguanine (PreQ1) at position 34 (anticodon wobble position) in tRNAs with GU(N) anticodons (tRNA-Asp, -Asn, -His and -Tyr). Catalysis occurs through a double-displacement mechanism. The nucleophile active site attacks the C1' of nucleotide 34 to detach the guanine base from the RNA, forming a covalent enzyme-RNA intermediate. The proton acceptor active site deprotonates the incoming PreQ1, allowing a nucleophilic attack on the C1' of the ribose to form the product. After dissociation, two additional enzymatic reactions on the tRNA convert PreQ1 to queuine (Q), resulting in the hypermodified nucleoside queuosine (7-(((4,5-cis-dihydroxy-2-cyclopenten-1-yl)amino)methyl)-7-deazaguanosine). In Vibrio cholerae serotype O1 (strain ATCC 39315 / El Tor Inaba N16961), this protein is Queuine tRNA-ribosyltransferase.